The chain runs to 1564 residues: NACHT domain- and WD repeat-containing protein 1 (1564 aa).

Positions 335 to 661 (TPLVLFGPPG…LLAIAHRQLV (327 aa)) constitute an NACHT domain. An ATP-binding site is contributed by 341–348 (GPPGIGKT). 14 WD repeats span residues 866–905 (GCHK…VIHM), 908–947 (GHTG…EKFT), 956–994 (PAEP…PVFH), 998–1037 (DASD…LQGK), 1044–1082 (KEET…LLEK), 1083–1121 (LPDA…RRFM), 1126–1165 (EHED…TLLD), 1167–1207 (LEGV…RSRV), 1212–1251 (LDRT…EQDS), 1253–1290 (DTSS…RQDV), 1291–1327 (ICIP…VLDI), 1338–1376 (GPRY…LYEC), 1380–1418 (KAFP…WDLQ), and 1425–1462 (EMSY…VWSV).

As to quaternary structure, may interact with HSP90AA1, HSP90AB1 and BAG2. As to expression, expressed at highest levels in prostate, followed by testis, retina, trachea and optic nerve. Also detected in brain, epididymis, lung, vagina and pituitary. In the prostate, tends to be up-regulated during malignant progression compared to normal epithelium (at protein level).

Its subcellular location is the cytoplasm. The protein resides in the cytosol. In terms of biological role, may play a role in the control of androgen receptor (AR) protein steady-state levels. This is NACHT domain- and WD repeat-containing protein 1 (NWD1) from Homo sapiens (Human).